The following is a 94-amino-acid chain: Co-chaperonin GroES (94 aa).

The protein belongs to the GroES chaperonin family. In terms of assembly, heptamer of 7 subunits arranged in a ring. Interacts with the chaperonin GroEL.

It is found in the cytoplasm. In terms of biological role, together with the chaperonin GroEL, plays an essential role in assisting protein folding. The GroEL-GroES system forms a nano-cage that allows encapsulation of the non-native substrate proteins and provides a physical environment optimized to promote and accelerate protein folding. GroES binds to the apical surface of the GroEL ring, thereby capping the opening of the GroEL channel. This Halothermothrix orenii (strain H 168 / OCM 544 / DSM 9562) protein is Co-chaperonin GroES.